We begin with the raw amino-acid sequence, 104 residues long: L-rhamnose mutarotase (104 aa).

Residue tyrosine 18 participates in substrate binding. The active-site Proton donor is histidine 22. Substrate-binding positions include tyrosine 41 and 76-77 (WW).

The protein belongs to the rhamnose mutarotase family. Homodimer.

The protein resides in the cytoplasm. The catalysed reaction is alpha-L-rhamnose = beta-L-rhamnose. Its pathway is carbohydrate metabolism; L-rhamnose metabolism. Functionally, involved in the anomeric conversion of L-rhamnose. This Burkholderia cenocepacia (strain HI2424) protein is L-rhamnose mutarotase.